The primary structure comprises 390 residues: GTPase Obg (390 aa).

The Obg domain maps to 1-159 (MKFVDEASIL…RELLLELMLL (159 aa)). The segment at 127-147 (NTRFKSSVNRTPRQKTNGTPG) is disordered. Positions 129–145 (RFKSSVNRTPRQKTNGT) are enriched in polar residues. One can recognise an OBG-type G domain in the interval 160 to 333 (ADVGMLGMPN…LCWDVMTFII (174 aa)). GTP contacts are provided by residues 166–173 (GMPNAGKS), 191–195 (FTTLV), 213–216 (DIPG), 283–286 (NKID), and 314–316 (SAA). The Mg(2+) site is built by S173 and T193.

The protein belongs to the TRAFAC class OBG-HflX-like GTPase superfamily. OBG GTPase family. Monomer. Mg(2+) serves as cofactor.

The protein localises to the cytoplasm. An essential GTPase which binds GTP, GDP and possibly (p)ppGpp with moderate affinity, with high nucleotide exchange rates and a fairly low GTP hydrolysis rate. Plays a role in control of the cell cycle, stress response, ribosome biogenesis and in those bacteria that undergo differentiation, in morphogenesis control. The protein is GTPase Obg of Shigella dysenteriae serotype 1 (strain Sd197).